We begin with the raw amino-acid sequence, 452 residues long: tRNA modification GTPase MnmE (452 aa).

Arg-21, Glu-78, and Lys-118 together coordinate (6S)-5-formyl-5,6,7,8-tetrahydrofolate. The 162-residue stretch at 214–375 folds into the TrmE-type G domain; that stretch reads GMKVVIAGRP…LREHLKKSMG (162 aa). Asn-224 lines the K(+) pocket. GTP-binding positions include 224 to 229, 243 to 249, and 268 to 271; these read NAGKSS, TNIAGTT, and DTAG. Ser-228 contributes to the Mg(2+) binding site. 3 residues coordinate K(+): Thr-243, Ile-245, and Thr-248. Residue Thr-249 coordinates Mg(2+). Lys-452 serves as a coordination point for (6S)-5-formyl-5,6,7,8-tetrahydrofolate.

It belongs to the TRAFAC class TrmE-Era-EngA-EngB-Septin-like GTPase superfamily. TrmE GTPase family. In terms of assembly, homodimer. Heterotetramer of two MnmE and two MnmG subunits. K(+) is required as a cofactor.

It localises to the cytoplasm. Functionally, exhibits a very high intrinsic GTPase hydrolysis rate. Involved in the addition of a carboxymethylaminomethyl (cmnm) group at the wobble position (U34) of certain tRNAs, forming tRNA-cmnm(5)s(2)U34. In Actinobacillus pleuropneumoniae serotype 3 (strain JL03), this protein is tRNA modification GTPase MnmE.